Here is a 338-residue protein sequence, read N- to C-terminus: MKVYYDKDCDLSIIQGKKVAIIGYGSQGHAQACNLKDSGVDVTIGLRKGSATVAKAEAHGLKVTDVASAVAAADLVMILTPDEFQGQLYKNEIEPNIKKGATLAFSHGFAIHYNQVVPRADLDVIMIAPKAPGHTVRTEFVKGGGIPDLIAVYQDASGNAKNVALSYASGVGGGRTGIIETTFKDETETDLFGEQAVLCGGTVELVKAGFETLVEAGYAPEMAYFECLHELKLIVDLMYEGGIANMNYSISNNAEYGEYVTGPEVINAESRQAMRNALKRIQDGEYAKMFISEGATGYPSMTAKRRNNAAHGIEVIGEQLRAMMPWIAANKIVDKTKN.

A KARI N-terminal Rossmann domain is found at 1–181 (MKVYYDKDCD…GGGRTGIIET (181 aa)). NADP(+)-binding positions include 24 to 27 (YGSQ), Arg47, Ser50, Thr52, and 82 to 85 (DEFQ). The active site involves His107. Gly133 serves as a coordination point for NADP(+). The KARI C-terminal knotted domain maps to 182–327 (TFKDETETDL…EQLRAMMPWI (146 aa)). Positions 190, 194, 226, and 230 each coordinate Mg(2+). Ser251 is a substrate binding site.

The protein belongs to the ketol-acid reductoisomerase family. Requires Mg(2+) as cofactor.

The catalysed reaction is (2R)-2,3-dihydroxy-3-methylbutanoate + NADP(+) = (2S)-2-acetolactate + NADPH + H(+). It catalyses the reaction (2R,3R)-2,3-dihydroxy-3-methylpentanoate + NADP(+) = (S)-2-ethyl-2-hydroxy-3-oxobutanoate + NADPH + H(+). It participates in amino-acid biosynthesis; L-isoleucine biosynthesis; L-isoleucine from 2-oxobutanoate: step 2/4. Its pathway is amino-acid biosynthesis; L-valine biosynthesis; L-valine from pyruvate: step 2/4. Functionally, involved in the biosynthesis of branched-chain amino acids (BCAA). Catalyzes an alkyl-migration followed by a ketol-acid reduction of (S)-2-acetolactate (S2AL) to yield (R)-2,3-dihydroxy-isovalerate. In the isomerase reaction, S2AL is rearranged via a Mg-dependent methyl migration to produce 3-hydroxy-3-methyl-2-ketobutyrate (HMKB). In the reductase reaction, this 2-ketoacid undergoes a metal-dependent reduction by NADPH to yield (R)-2,3-dihydroxy-isovalerate. The polypeptide is Ketol-acid reductoisomerase (NADP(+)) (Ectopseudomonas mendocina (strain ymp) (Pseudomonas mendocina)).